The sequence spans 76 residues: UPF0248 protein MmarC7_1289 (76 aa).

Belongs to the UPF0248 family.

This is UPF0248 protein MmarC7_1289 from Methanococcus maripaludis (strain C7 / ATCC BAA-1331).